A 356-amino-acid polypeptide reads, in one-letter code: 3-deoxy-alpha-D-manno-octulosonate 8-oxidase (356 aa).

This sequence belongs to the iron-containing alcohol dehydrogenase family. The cofactor is a divalent metal cation.

It catalyses the reaction 3-deoxy-alpha-D-manno-oct-2-ulosonate + O2 = 3,8-dideoxy-8-oxo-alpha-D-manno-octulosonate + H2O2. The protein operates within bacterial outer membrane biogenesis; lipopolysaccharide biosynthesis. With respect to regulation, inhibited by EDTA. Its function is as follows. Catalyzes the first step of the biosynthesis of Kdo8N (8-amino-3,8-dideoxy-D-manno-octulosonate) from Kdo (3-deoxy-D-manno-octulosonate). The polypeptide is 3-deoxy-alpha-D-manno-octulosonate 8-oxidase (Shewanella oneidensis (strain ATCC 700550 / JCM 31522 / CIP 106686 / LMG 19005 / NCIMB 14063 / MR-1)).